Consider the following 140-residue polypeptide: Odorant-binding protein 10 (140 aa).

Residues 1-25 (MTSFRLANLTVFLVLLFCFMRGVHS) form the signal peptide.

The protein belongs to the PBP/GOBP family. High-level expression in female mouth parts, particularly in the proboscis (at protein level). Low-level expression in female antenna (at protein level). Female salivary gland. Female chemosensory organs: antenna, palp and proboscis. Male antenna, wing and maxillary palp. Expressed at higher levels in male tissues compared to female tissues. Not detected in midgut.

The protein localises to the secreted. Functionally, involved in modulation of blood-feeding behavior and capacity in female mosquitoes. Required for normal oviposition. Required for normal fecundity and fertility of female mosquitoes. Required for normal expression of VGA1 gene, which encodes the egg yolk protein vitellogenin-A1. Required for normal female longevity when mosquitoes are maintained on regular sugar meal. In terms of biological role, (Microbial infection) Facilitates shedding of dengue virus type 2 particles into mosquito saliva. Does not affect dengue virus type 2 replication or infection prevalence in midgut and salivary glands at 14 days after blood feeding. (Microbial infection) Facilitates shedding of Zika virus particles into mosquito saliva. Does not affect Zika virus replication or infection prevalence in midgut and salivary glands at 14 days after blood feeding. The polypeptide is Odorant-binding protein 10 (Aedes aegypti (Yellowfever mosquito)).